The chain runs to 192 residues: Peptidyl-tRNA hydrolase (192 aa).

Tyr18 is a tRNA binding site. Catalysis depends on His23, which acts as the Proton acceptor. Residues Phe69, Asn71, and Asn117 each contribute to the tRNA site.

The protein belongs to the PTH family. As to quaternary structure, monomer.

It is found in the cytoplasm. The catalysed reaction is an N-acyl-L-alpha-aminoacyl-tRNA + H2O = an N-acyl-L-amino acid + a tRNA + H(+). Functionally, hydrolyzes ribosome-free peptidyl-tRNAs (with 1 or more amino acids incorporated), which drop off the ribosome during protein synthesis, or as a result of ribosome stalling. Catalyzes the release of premature peptidyl moieties from peptidyl-tRNA molecules trapped in stalled 50S ribosomal subunits, and thus maintains levels of free tRNAs and 50S ribosomes. The protein is Peptidyl-tRNA hydrolase of Neisseria gonorrhoeae (strain ATCC 700825 / FA 1090).